A 671-amino-acid polypeptide reads, in one-letter code: DNA ligase (671 aa).

Residues 32–36 (DAEYD), 81–82 (SL), and Glu-113 each bind NAD(+). Lys-115 (N6-AMP-lysine intermediate) is an active-site residue. Arg-136, Glu-173, Lys-290, and Lys-314 together coordinate NAD(+). Zn(2+) contacts are provided by Cys-408, Cys-411, Cys-426, and Cys-432. The BRCT domain occupies 593–671 (EIDSPFAGKT…EAEMIRLLDA (79 aa)).

The protein belongs to the NAD-dependent DNA ligase family. LigA subfamily. The cofactor is Mg(2+). Mn(2+) is required as a cofactor.

The enzyme catalyses NAD(+) + (deoxyribonucleotide)n-3'-hydroxyl + 5'-phospho-(deoxyribonucleotide)m = (deoxyribonucleotide)n+m + AMP + beta-nicotinamide D-nucleotide.. Functionally, DNA ligase that catalyzes the formation of phosphodiester linkages between 5'-phosphoryl and 3'-hydroxyl groups in double-stranded DNA using NAD as a coenzyme and as the energy source for the reaction. It is essential for DNA replication and repair of damaged DNA. The protein is DNA ligase of Salmonella schwarzengrund (strain CVM19633).